Consider the following 446-residue polypeptide: Glutamate-1-semialdehyde 2,1-aminomutase (446 aa).

Lysine 264 bears the N6-(pyridoxal phosphate)lysine mark.

It belongs to the class-III pyridoxal-phosphate-dependent aminotransferase family. HemL subfamily. Pyridoxal 5'-phosphate serves as cofactor.

The protein resides in the cytoplasm. The enzyme catalyses (S)-4-amino-5-oxopentanoate = 5-aminolevulinate. It participates in porphyrin-containing compound metabolism; protoporphyrin-IX biosynthesis; 5-aminolevulinate from L-glutamyl-tRNA(Glu): step 2/2. This chain is Glutamate-1-semialdehyde 2,1-aminomutase, found in Natronomonas pharaonis (strain ATCC 35678 / DSM 2160 / CIP 103997 / JCM 8858 / NBRC 14720 / NCIMB 2260 / Gabara) (Halobacterium pharaonis).